We begin with the raw amino-acid sequence, 470 residues long: 5-hydroxytryptamine receptor 2A (470 aa).

The Extracellular segment spans residues 1-80 (MDILCEENTS…LQEKNWSALL (80 aa)). An N-linked (GlcNAc...) asparagine glycan is attached at Asn38. Residues 81 to 97 (TAVVIILTIAGNILVIM) form a helical membrane-spanning segment. Over 98–111 (AVSLEKKLQNATNY) the chain is Cytoplasmic. A helical membrane pass occupies residues 112 to 137 (FLMSLAIADMLLGFLVMPVSTLTILY). Over 138–146 (GYRWPLPSK) the chain is Extracellular. A helical membrane pass occupies residues 147-171 (LCAVWIYLDVLFSTASIMHLCAISL). Residues Cys148 and Cys227 are joined by a disulfide bond. Position 155 (Asp155) interacts with serotonin. The DRY motif; important for ligand-induced conformation changes signature appears at 172–174 (DRY). The Cytoplasmic portion of the chain corresponds to 172-191 (DRYVAIQNPIHHSRFNSRTK). The chain crosses the membrane as a helical span at residues 192–215 (AFLKIIAVWTISVGISMPIPVFGL). Residues 216 to 232 (QDDSKVFKEGSCLLADE) are Extracellular-facing. A helical transmembrane segment spans residues 233 to 258 (NFVLIGSFVAFFIPLTIMVITYFLTI). Residues 259-321 (KSLQKEATLC…QSISNEQKAC (63 aa)) are Cytoplasmic-facing. Ser280 carries the phosphoserine modification. Residues 322–347 (KVLGIVFFLFVVMWCPFFITNIMAVI) form a helical membrane-spanning segment. Residue Asn342 coordinates serotonin. Cys348 and Cys352 are disulfide-bonded. Topologically, residues 348–355 (CKESCNRD) are extracellular. Residues 356–381 (VIEALLNVFVWIGYLSSAVNPLVYTL) form a helical membrane-spanning segment. The NPxxY motif; important for ligand-induced conformation changes and signaling motif lies at 375–379 (NPLVY). Topologically, residues 382 to 470 (FNKTYRSAFS…NTVNEKVSCV (89 aa)) are cytoplasmic. Residues 424–470 (QMGPKKNSKKDDKTTDNDCTMVALGKEHPEDAPADSSNTVNEKVSCV) are disordered. The span at 458–470 (DSSNTVNEKVSCV) shows a compositional bias: polar residues. The short motif at 468-470 (SCV) is the PDZ-binding element.

This sequence belongs to the G-protein coupled receptor 1 family. Interacts (via C-terminus) with MPDZ and PATJ. May interact (via C-terminus) with MPP3, PRDX6, DLG4, DLG1, CASK, APBA1 and MAGI2. Interacts with GRM2 and DRD2; this may affect signaling.

The protein localises to the cell membrane. The protein resides in the cell projection. It localises to the dendrite. Its subcellular location is the axon. It is found in the cytoplasmic vesicle. The protein localises to the membrane. The protein resides in the caveola. It localises to the presynapse. Its activity is regulated as follows. G-protein coupled receptor activity is regulated by lipids: oleamide increases HTR2A-mediated activity. In terms of biological role, G-protein coupled receptor for 5-hydroxytryptamine (serotonin). Also functions as a receptor for various drugs and psychoactive substances, including mescaline, psilocybin, 1-(2,5-dimethoxy-4-iodophenyl)-2-aminopropane (DOI) and lysergic acid diethylamide (LSD). Ligand binding causes a conformation change that triggers signaling via guanine nucleotide-binding proteins (G proteins) and modulates the activity of downstream effectors. HTR2A is coupled to G(q)/G(11) G alpha proteins and activates phospholipase C-beta, releasing diacylglycerol (DAG) and inositol 1,4,5-trisphosphate (IP3) second messengers that modulate the activity of phosphatidylinositol 3-kinase and promote the release of Ca(2+) ions from intracellular stores, respectively. Beta-arrestin family members inhibit signaling via G proteins and mediate activation of alternative signaling pathways. Affects neural activity, perception, cognition and mood. Plays a role in the regulation of behavior, including responses to anxiogenic situations and psychoactive substances. Plays a role in intestinal smooth muscle contraction, and may play a role in arterial vasoconstriction. The chain is 5-hydroxytryptamine receptor 2A (HTR2A) from Bos taurus (Bovine).